A 730-amino-acid polypeptide reads, in one-letter code: Wall-associated receptor kinase-like 1 (730 aa).

The first 25 residues, 1-25 (MKTKTSIFQFIVASVLTLLINDSSA), serve as a signal peptide directing secretion. Residues 26–358 (ATPPPPISNS…KPTKPPVLQG (333 aa)) lie on the Extracellular side of the membrane. Asn34, Asn40, Asn70, Asn77, Asn92, Asn119, Asn132, Asn211, Asn233, Asn269, and Asn281 each carry an N-linked (GlcNAc...) asparagine glycan. An atypical EGF-like region spans residues 282–341 (CSCEYDYFSGMSYRNCYCDYGYTGNPYLRGGCVDTDSCEGNHNCGEDAHCVNMPGPMSMC). 3 cysteine pairs are disulfide-bonded: Cys284–Cys297, Cys319–Cys331, and Cys325–Cys341. Residues 359–379 (ILIGLSGLVFFVGLFWLFKLI) form a helical membrane-spanning segment. Residues 380 to 730 (KKRRNINRSK…DQPMAINNKR (351 aa)) are Cytoplasmic-facing. In terms of domain architecture, Protein kinase spans 429–702 (FSIDRVLGQG…KEVSNELERI (274 aa)). Residues 435–443 (LGQGGQGTV) and Lys457 contribute to the ATP site. At Tyr502 the chain carries Phosphotyrosine. Residue Asp554 is the Proton acceptor of the active site. A phosphothreonine mark is found at Thr588 and Thr593. Tyr601 carries the post-translational modification Phosphotyrosine. The disordered stretch occupies residues 685 to 730 (KGKNRPNMKEVSNELERIRSSPEDLDVRTENEDEEEDQPMAINNKR). A compositionally biased stretch (basic and acidic residues) spans 691 to 714 (NMKEVSNELERIRSSPEDLDVRTE).

It belongs to the protein kinase superfamily. Ser/Thr protein kinase family. Preferentially expressed in roots and flowers.

Its subcellular location is the membrane. The catalysed reaction is L-seryl-[protein] + ATP = O-phospho-L-seryl-[protein] + ADP + H(+). It carries out the reaction L-threonyl-[protein] + ATP = O-phospho-L-threonyl-[protein] + ADP + H(+). Functionally, serine/threonine-protein kinase that may function as a signaling receptor of extracellular matrix component. In Arabidopsis thaliana (Mouse-ear cress), this protein is Wall-associated receptor kinase-like 1 (WAKL1).